Consider the following 140-residue polypeptide: Ergosterol biosynthetic protein 28 homolog (140 aa).

The next 4 membrane-spanning stretches (helical) occupy residues 4–24 (FLNV…GNTL), 52–72 (TFGI…IDIH), 79–99 (ITLW…FVFG), and 105–125 (VGVL…LVGL).

The protein belongs to the ERG28 family.

The protein resides in the endoplasmic reticulum membrane. This Mus musculus (Mouse) protein is Ergosterol biosynthetic protein 28 homolog.